The primary structure comprises 859 residues: Homeobox-leucine zipper protein HOX32 (859 aa).

Positions 7-31 (AAVHGVGRQDRSSPGGGGAPQVDTG) are disordered. The homeobox DNA-binding region spans 29–92 (DTGKYVRYTP…NRRCREKQRK (64 aa)). The stretch at 100–129 (VNRKLTAMNKLLMEENDRLQKQVSRLVYEN) forms a coiled coil. The span at 146–164 (TSCESVVTSGQHHQQQNPA) shows a compositional bias: polar residues. The tract at residues 146-172 (TSCESVVTSGQHHQQQNPAATRPQRDA) is disordered. The region spanning 171-393 (DANNPAGLLA…LRHIRQIAHE (223 aa)) is the START domain.

This sequence belongs to the HD-ZIP homeobox family. Class III subfamily. As to expression, expressed in seedlings, roots, stems, leaf sheaths and blades and panicles.

It is found in the nucleus. In terms of biological role, probable transcription factor. The sequence is that of Homeobox-leucine zipper protein HOX32 (HOX32) from Oryza sativa subsp. indica (Rice).